A 193-amino-acid chain; its full sequence is Xanthine phosphoribosyltransferase (193 aa).

Residues Leu20 and Asn27 each coordinate xanthine. 128–132 serves as a coordination point for 5-phospho-alpha-D-ribose 1-diphosphate; sequence ANGDA. Residue Lys156 participates in xanthine binding.

The protein belongs to the purine/pyrimidine phosphoribosyltransferase family. Xpt subfamily. As to quaternary structure, homodimer.

The protein resides in the cytoplasm. The catalysed reaction is XMP + diphosphate = xanthine + 5-phospho-alpha-D-ribose 1-diphosphate. Its pathway is purine metabolism; XMP biosynthesis via salvage pathway; XMP from xanthine: step 1/1. In terms of biological role, converts the preformed base xanthine, a product of nucleic acid breakdown, to xanthosine 5'-monophosphate (XMP), so it can be reused for RNA or DNA synthesis. This is Xanthine phosphoribosyltransferase from Staphylococcus haemolyticus (strain JCSC1435).